We begin with the raw amino-acid sequence, 534 residues long: NAD(P)H-quinone oxidoreductase chain 4 (534 aa).

A run of 14 helical transmembrane segments spans residues F12–F32, F44–F64, M96–V116, P120–V140, L144–W164, F176–F196, I220–H240, T251–L271, F285–F305, I314–S334, A340–A360, F384–V404, V425–M445, and V472–V492.

This sequence belongs to the complex I subunit 4 family.

Its subcellular location is the cellular thylakoid membrane. It carries out the reaction a plastoquinone + NADH + (n+1) H(+)(in) = a plastoquinol + NAD(+) + n H(+)(out). It catalyses the reaction a plastoquinone + NADPH + (n+1) H(+)(in) = a plastoquinol + NADP(+) + n H(+)(out). Its function is as follows. NDH-1 shuttles electrons from NAD(P)H, via FMN and iron-sulfur (Fe-S) centers, to quinones in the respiratory chain. The immediate electron acceptor for the enzyme in this species is believed to be plastoquinone. Couples the redox reaction to proton translocation (for every two electrons transferred, four hydrogen ions are translocated across the cytoplasmic membrane), and thus conserves the redox energy in a proton gradient. The chain is NAD(P)H-quinone oxidoreductase chain 4 from Prochlorococcus marinus (strain AS9601).